Consider the following 1209-residue polypeptide: Putative lysine-specific demethylase JMJ16 (1209 aa).

Residues 146-187 (APVFYPSEEEFEDTLNYIAKIRPEAEKYGICRIVPPPSWKPP) enclose the JmjN domain. Residues 217–224 (MKKISKLP) carry the Nuclear localization signal motif. One can recognise a JmjC domain in the interval 361 to 527 (KYAKSGWNLN…HGQIAIELYC (167 aa)). The Fe cation site is built by histidine 407, glutamate 409, and histidine 495. Zn(2+)-binding residues include cysteine 617, cysteine 620, cysteine 631, cysteine 633, cysteine 640, histidine 643, cysteine 648, and cysteine 650. Residues 617 to 667 (CCICFFDLHLSAAGCRCSPEKYSCLTHVKELCSCPWVTKYFLFRYDIDELN) form a C5HC2 zinc finger. A disordered region spans residues 872 to 900 (DTRNTISLPTNDQKTMRRDVPSSTSHAEV). Residues 875–884 (NTISLPTNDQ) are compositionally biased toward polar residues. The FYR N-terminal domain maps to 974–1032 (VVRRINCNVEPLSYGCVLSGKSWCSRRAIFPKGFRSRVKYINILDPTNMCFYISEILDA). Residues 1034-1124 (RNSPLFMVYL…RVCTDYWDSR (91 aa)) form the FYR C-terminal domain.

The protein belongs to the JARID1 histone demethylase family. In terms of assembly, interacts with MMD1 in the nucleus of male meiocytes, especially on pachytene chromosomes. It depends on Fe(2+) as a cofactor. In terms of tissue distribution, confined to inflorescences.

It is found in the nucleus. The enzyme catalyses N(6),N(6),N(6)-trimethyl-L-lysyl(4)-[histone H3] + 2-oxoglutarate + O2 = N(6),N(6)-dimethyl-L-lysyl(4)-[histone H3] + formaldehyde + succinate + CO2. It catalyses the reaction N(6),N(6)-dimethyl-L-lysyl(4)-[histone H3] + 2-oxoglutarate + O2 = N(6)-methyl-L-lysyl(4)-[histone H3] + formaldehyde + succinate + CO2. It carries out the reaction N(6)-methyl-L-lysyl(4)-[histone H3] + 2-oxoglutarate + O2 = L-lysyl(4)-[histone H3] + formaldehyde + succinate + CO2. In terms of biological role, functions as a histone H3 'Lys-4' (H3K4me) demethylase involved in the negative regulation of gene expression. Active on H3K4me1, H3K4me2 and H3K4me3. Not active on mono-, di- and trimethylated H3K9, H3K27 and H3K36 in somatic cells. However, also active on H3K9 when in complex with MMD1, a meiocyte-specific histone reader. Together with MMD1, promotes gene expression in male meiocytes in an H3K9me3-dependent manner, and contributes to meiotic chromosome condensation by triggering some condensin promoters (e.g. CAP-D3 and CAP-H). Together with JMJ14 and JMJ17, required for plant growth and development. Represses leaf senescence in an age-dependent manner by demethylating H3K4me3 activating histone marks at senescence-associated genes (SAGs) loci, including WRKY53 and SAG201, thus preventing their premature expression. This is Putative lysine-specific demethylase JMJ16 from Arabidopsis thaliana (Mouse-ear cress).